Consider the following 625-residue polypeptide: UvrABC system protein C (625 aa).

One can recognise a GIY-YIG domain in the interval 26-105 (LEPGVYFLRD…IKQHQPHFNT (80 aa)). The 36-residue stretch at 215–250 (GELLEKLATKMLAASENLDFEQAATIRDQIRGLQAL) folds into the UVR domain.

This sequence belongs to the UvrC family. As to quaternary structure, interacts with UvrB in an incision complex.

It localises to the cytoplasm. Its function is as follows. The UvrABC repair system catalyzes the recognition and processing of DNA lesions. UvrC both incises the 5' and 3' sides of the lesion. The N-terminal half is responsible for the 3' incision and the C-terminal half is responsible for the 5' incision. The protein is UvrABC system protein C of Microcystis aeruginosa (strain NIES-843 / IAM M-2473).